A 146-amino-acid polypeptide reads, in one-letter code: Small ribosomal subunit protein uS5 (146 aa).

An S5 DRBM domain is found at 8–71; the sequence is FEEVIVNIGR…DDAFKNIIDV (64 aa).

Belongs to the universal ribosomal protein uS5 family. As to quaternary structure, part of the 30S ribosomal subunit. Contacts proteins S4 and S8.

In terms of biological role, with S4 and S12 plays an important role in translational accuracy. Located at the back of the 30S subunit body where it stabilizes the conformation of the head with respect to the body. The protein is Small ribosomal subunit protein uS5 of Campylobacter hominis (strain ATCC BAA-381 / DSM 21671 / CCUG 45161 / LMG 19568 / NCTC 13146 / CH001A).